Here is a 576-residue protein sequence, read N- to C-terminus: High-affinity choline transporter 1 (576 aa).

The chain crosses the membrane as a helical span at residues 6–26 (GIVAIVFFYVLILVVGIWAGR). Topologically, residues 27–51 (KSKSSKELESEAGAATEEVMLAGRN) are cytoplasmic. The helical transmembrane segment at 52–72 (IGTLVGIFTMTATWVGGAYIN) threads the bilayer. The Extracellular portion of the chain corresponds to 73-82 (GTAEALYNGG). Residues 83–103 (LLGCQAPVGYAISLVMGGLLF) form a helical membrane-spanning segment. At 104-126 (AKKMREEGYITMLDPFQHKYGQR) the chain is on the cytoplasmic side. A helical transmembrane segment spans residues 127 to 147 (IGGLMYVPALLGETFWTAAIL). The Extracellular segment spans residues 148 to 165 (SALGATLSVILGIDMNAS). The chain crosses the membrane as a helical span at residues 166 to 186 (VTLSACIAVFYTFTGGYYAVA). Residues 187-192 (YTDVVQ) are Cytoplasmic-facing. Residues 193–213 (LFCIFVGLWVCVPAAMVHDGA) form a helical membrane-spanning segment. The Extracellular segment spans residues 214 to 233 (KDISRNAGDWIGEIGGFKET). The helical transmembrane segment at 234-254 (SLWIDCMLLLVFGGIPWQVYF) threads the bilayer. At 255-270 (QRVLSSKTAHGAQTLS) the chain is on the cytoplasmic side. The helical transmembrane segment at 271–291 (FVAGVGCILMAIPPALIGAIA) threads the bilayer. Residues 292–319 (RNTDWRMTDYSPWNNGTKVESIPPDKRN) are Extracellular-facing. Residue Asn306 is glycosylated (N-linked (GlcNAc...) asparagine). Residues 320-340 (MVVPLVFQYLTPRWVAFIGLG) form a helical membrane-spanning segment. Over 341–378 (AVSAAVMSSADSSVLSAASMFAHNIWKLTIRPHASEKE) the chain is Cytoplasmic. Residues 379–399 (VIIVMRIAIICVGIMATIMAL) traverse the membrane as a helical segment. The Extracellular portion of the chain corresponds to 400-408 (TIQSIYGLW). Residues 409–429 (YLCADLVYVILFPQLLCVVYM) traverse the membrane as a helical segment. Topologically, residues 430-437 (PRSNTYGS) are cytoplasmic. A helical membrane pass occupies residues 438–458 (LAGYAVGLVLRLIGGEPLVSL). Over 459–478 (PAFFHYPMYTDGVQYFPFRT) the chain is Extracellular. Residues 479 to 499 (TAMLSSMATIYIVSIQSEKLF) form a helical membrane-spanning segment. Residues 500–576 (KSGRLSPEWD…DQSYYSTNSN (77 aa)) lie on the Cytoplasmic side of the membrane. Residues 541 to 576 (APNGTPAPVHPNQQPSDENTLLHPYSDQSYYSTNSN) form a disordered region. Positions 566 to 576 (SDQSYYSTNSN) are enriched in polar residues.

It belongs to the sodium:solute symporter (SSF) (TC 2.A.21) family. As to expression, detected in the nervous system, including the nerve ring and cholinergic motor neurons of the ventral nerve cord.

Its subcellular location is the membrane. In terms of biological role, imports choline from the extracellular space to the neuron with high affinity. Choline uptake is the rate-limiting step in acetylcholine synthesis. Sodium ion and chloride ion dependent. The protein is High-affinity choline transporter 1 (cho-1) of Caenorhabditis elegans.